Reading from the N-terminus, the 479-residue chain is UDP-glucose flavonoid 3-O-glucosyltransferase 6 (479 aa).

H17 (proton acceptor) is an active-site residue. Position 17 (H17) interacts with an anthocyanidin. The Charge relay role is filled by D121. 8 residues coordinate UDP-alpha-D-glucose: T143, A354, Q356, H371, W374, N375, S376, and E379. An an anthocyanidin-binding site is contributed by A394. UDP-alpha-D-glucose contacts are provided by E395 and Q396. The segment at 454 to 479 (MSRKALEEDGSSYSSLGRFLDQIQTS) is disordered.

The protein belongs to the UDP-glycosyltransferase family. Strongly expressed in achenes, with lower expression levels detected in receptacles.

It carries out the reaction a flavonol + UDP-alpha-D-glucose = a flavonol 3-O-beta-D-glucoside + UDP + H(+). Functionally, broad spectrum multifunctional glucosyltransferase. Catalyzes the formation of flavonol 3-O-glucosides during fruit ripening. Accepted substrates include several flavonoids, hydroxycoumarins and beta-naphthols. Uses UDP-Glc as a sugar donor, but not UDP-Gal or UDP-GlcUA. May also be involved in detoxification of xenobiotics. The chain is UDP-glucose flavonoid 3-O-glucosyltransferase 6 from Fragaria ananassa (Strawberry).